The sequence spans 1037 residues: Tyrosine-protein kinase-like otk (1037 aa).

The first 22 residues, 1–22 (MAALRISVWILVQALMMALVSS), serve as a signal peptide directing secretion. Residues N23 and N39 are each glycosylated (N-linked (GlcNAc...) asparagine). The Extracellular segment spans residues 23–582 (NSSHFLQLPQ…GGDGFLVTRA (560 aa)). Ig-like C2-type domains are found at residues 25-115 (SHFL…AKLS), 114-200 (LSVI…RVMS), 252-366 (PEDL…APIN), 369-464 (PGTL…VAIN), and 469-559 (PKFS…VQLV). 4 cysteine pairs are disulfide-bonded: C46/C96, C138/C189, C277/C355, and C400/C448. N337, N418, N430, N445, N458, N513, and N525 each carry an N-linked (GlcNAc...) asparagine glycan. Residues C491 and C543 are joined by a disulfide bond. The chain crosses the membrane as a helical span at residues 583–603 (VLITMTVALAYIVLVVGLMLW). At 604–1037 (CRYRRQARKA…LSKAMQSLEK (434 aa)) the chain is on the cytoplasmic side. Disordered regions lie at residues 618-681 (LSTK…KKSA) and 719-764 (ATGS…KTSM). Positions 653-675 (QSRSKSNGDAQKSDDTACSQQSR) are enriched in polar residues. The residue at position 680 (S680) is a Phosphoserine. In terms of domain architecture, Protein kinase; inactive spans 694–1035 (LTELIQIGRG…AALSKAMQSL (342 aa)). The span at 724–735 (SDKDADTEKQHS) shows a compositional bias: basic and acidic residues.

The protein belongs to the protein kinase superfamily. Tyr protein kinase family. Insulin receptor subfamily. As to quaternary structure, interacts with plexA; component of a receptor complex that mediates the repulsive signaling in response to Semaphorin ligands.

It localises to the cell membrane. In terms of biological role, acts as a calcium-dependent, homophilic cell adhesion molecule that regulates neural recognition during the development of the nervous system. Component of the repulsive Plexin signaling response to regulate motor axon guidance at the embryonic stage. Also component of a receptor complex that is required in the adult visual system to innervate the lamina layer; specific targeting of R1-R6 axons. The sequence is that of Tyrosine-protein kinase-like otk from Drosophila ananassae (Fruit fly).